We begin with the raw amino-acid sequence, 338 residues long: Aspartate carbamoyltransferase catalytic subunit (338 aa).

Residues arginine 59 and threonine 60 each coordinate carbamoyl phosphate. Lysine 87 contributes to the L-aspartate binding site. Arginine 109, histidine 142, and glutamine 145 together coordinate carbamoyl phosphate. L-aspartate-binding residues include arginine 182 and arginine 253. Glycine 294 and proline 295 together coordinate carbamoyl phosphate.

This sequence belongs to the aspartate/ornithine carbamoyltransferase superfamily. ATCase family. Heterododecamer (2C3:3R2) of six catalytic PyrB chains organized as two trimers (C3), and six regulatory PyrI chains organized as three dimers (R2).

It catalyses the reaction carbamoyl phosphate + L-aspartate = N-carbamoyl-L-aspartate + phosphate + H(+). It functions in the pathway pyrimidine metabolism; UMP biosynthesis via de novo pathway; (S)-dihydroorotate from bicarbonate: step 2/3. In terms of biological role, catalyzes the condensation of carbamoyl phosphate and aspartate to form carbamoyl aspartate and inorganic phosphate, the committed step in the de novo pyrimidine nucleotide biosynthesis pathway. The chain is Aspartate carbamoyltransferase catalytic subunit from Prochlorococcus marinus (strain SARG / CCMP1375 / SS120).